Reading from the N-terminus, the 333-residue chain is PDZ domain-containing protein GIPC1 (333 aa).

Positions 1–11 (MPLGLGRRKKA) are enriched in basic residues. The disordered stretch occupies residues 1-54 (MPLGLGRRKKAPPLVENEEAEPGRGGLGVGEPGPLGGGGSGGPQMGLPPPPPAL). The span at 23–44 (GRGGLGVGEPGPLGGGGSGGPQ) shows a compositional bias: gly residues. Residue S68 is modified to Phosphoserine. The 81-residue stretch at 133–213 (EVEVFKSEDA…GRTFTLKLTE (81 aa)) folds into the PDZ domain. 3 positions are modified to phosphoserine: S222, S225, and S232. Residues 223-244 (QRSAGGRPGSGPQLGTGRGTLR) form a disordered region. Gly residues predominate over residues 228-240 (GRPGSGPQLGTGR). T242 bears the Phosphothreonine mark. S247 carries the phosphoserine modification.

The protein belongs to the GIPC family. Interacts with GLUT1 (C-terminus), ACTN1, KIF1B, MYO6, PLEKHG5, SDC4/syndecan-4 and SEMA4C/semaphorin-4C. Interacts with RGS19 C-terminus. Interacts with HTLV-I Tax through the PDZ domain. Widely expressed. Expressed in skeletal muscle (at protein level).

It localises to the cytoplasm. It is found in the membrane. In terms of biological role, may be involved in G protein-linked signaling. The polypeptide is PDZ domain-containing protein GIPC1 (GIPC1) (Homo sapiens (Human)).